We begin with the raw amino-acid sequence, 375 residues long: MSTAGKVIKCKAAVLWEVMKPFSIEDVEVAPPKAYEVRIKMVTVGICGTDDHVVSGTMVTPLPVILGHEAAGIVESVGEGVTTVEPGDKVIPLALPQCGKCRICKTPERNYCLKNDVSNPRGTLQDGTSRFTCRGKPIHHFLGVSTFSQYTVVDENAVAKIDAASPMEKVCLIGCGFSTGYGSAVKVAKVTPGSTCAVFGLGGVGLSAVMGCKAAGAARIIAVDINKDKFAKAKELGATECINPQDYKKPIQEVLKEMTDGGVDFSFEVIGRLDTMMASLLCCHEACGTSVIVGVPPDSQNLSINPMLLLTGRTWKGAVYGGFKSKEDIPKLVADFMAKKFSLDALITHVLPFEKINEGFDLLRSGKSIRTILTF.

An N-acetylserine modification is found at Ser2. A Phosphoserine modification is found at Ser23. Residue Tyr35 is modified to Phosphotyrosine. Cys47 provides a ligand contact to Zn(2+). 48–52 (GTDDH) is an NAD(+) binding site. Residues His68, Cys98, Cys101, Cys104, Cys112, and Cys175 each coordinate Zn(2+). Residues 200-205 (GLGGVG), Asp224, Lys229, Ile270, 293-295 (VGV), 318-320 (AVY), and Arg370 contribute to the NAD(+) site.

The protein belongs to the zinc-containing alcohol dehydrogenase family. Dimer of identical or heterodimer of closely related subunits alpha, beta, or gamma that are encoded by genes ADH1A, ADH1B, and ADH1C, respectively. Requires Zn(2+) as cofactor.

The protein resides in the cytoplasm. It catalyses the reaction a primary alcohol + NAD(+) = an aldehyde + NADH + H(+). The enzyme catalyses a secondary alcohol + NAD(+) = a ketone + NADH + H(+). It carries out the reaction butan-1-ol + NAD(+) = butanal + NADH + H(+). The catalysed reaction is 1-propanol + NAD(+) = propanal + NADH + H(+). It catalyses the reaction propan-2-ol + NAD(+) = acetone + NADH + H(+). Its function is as follows. Alcohol dehydrogenase. Oxidizes primary as well as secondary alcohols. Ethanol is a very poor substrate. The chain is Alcohol dehydrogenase 1A (ADH1A) from Macaca mulatta (Rhesus macaque).